The chain runs to 302 residues: Proline dehydrogenase 1 (302 aa).

Residue Lys95 coordinates substrate. Residue Asp129 is part of the active site. Residues Met130 and Gln158 each coordinate FAD. Arg179 is a catalytic residue. Residues 182–184 (KGA) and 221–222 (TH) contribute to the FAD site. 283-284 (RR) is a substrate binding site.

This sequence belongs to the proline oxidase family. FAD is required as a cofactor.

The catalysed reaction is L-proline + a quinone = (S)-1-pyrroline-5-carboxylate + a quinol + H(+). It participates in amino-acid degradation; L-proline degradation into L-glutamate; L-glutamate from L-proline: step 1/2. Functionally, converts proline to delta-1-pyrroline-5-carboxylate. The sequence is that of Proline dehydrogenase 1 (fadM) from Bacillus subtilis subsp. natto.